The sequence spans 186 residues: Ribonuclease M5 (186 aa).

The Toprim domain maps to 6 to 89; that stretch reads SQVIVVEGRD…AFLKRDEAVP (84 aa). The Mg(2+) site is built by Glu-12, Asp-58, and Asp-60.

It belongs to the ribonuclease M5 family. Mg(2+) is required as a cofactor.

The protein resides in the cytoplasm. It carries out the reaction Endonucleolytic cleavage of RNA, removing 21 and 42 nucleotides, respectively, from the 5'- and 3'-termini of a 5S-rRNA precursor.. Functionally, required for correct processing of both the 5' and 3' ends of 5S rRNA precursor. Cleaves both sides of a double-stranded region yielding mature 5S rRNA in one step. The protein is Ribonuclease M5 of Streptococcus pneumoniae (strain ATCC BAA-255 / R6).